The following is a 932-amino-acid chain: Beta-mannosidase A (932 aa).

The signal sequence occupies residues 1–21 (MRIREQTILALLSPGLPPVTG). 5 N-linked (GlcNAc...) asparagine glycosylation sites follow: Asn-40, Asn-248, Asn-283, Asn-317, and Asn-348. Residue Glu-480 is the Proton donor of the active site. N-linked (GlcNAc...) asparagine glycans are attached at residues Asn-538, Asn-609, Asn-632, Asn-659, Asn-739, Asn-762, and Asn-791.

The protein belongs to the glycosyl hydrolase 2 family. Beta-mannosidase A subfamily. Homodimer.

It localises to the secreted. It carries out the reaction Hydrolysis of terminal, non-reducing beta-D-mannose residues in beta-D-mannosides.. Its pathway is glycan metabolism; N-glycan degradation. Its function is as follows. Exoglycosidase that cleaves the single beta-linked mannose residue from the non-reducing end of beta-mannosidic oligosaccharides of various complexity and length. Involved in the degradation of polymeric mannan and galactomannan. This Aspergillus clavatus (strain ATCC 1007 / CBS 513.65 / DSM 816 / NCTC 3887 / NRRL 1 / QM 1276 / 107) protein is Beta-mannosidase A (mndA).